The chain runs to 250 residues: Type III pantothenate kinase (250 aa).

Residue 6–13 (DVGNTNTV) coordinates ATP. Residue 103 to 106 (GADR) coordinates substrate. The Proton acceptor role is filled by D105. K(+) is bound at residue D125. T128 contributes to the ATP binding site. A substrate-binding site is contributed by T180.

It belongs to the type III pantothenate kinase family. In terms of assembly, homodimer. It depends on NH4(+) as a cofactor. The cofactor is K(+).

The protein localises to the cytoplasm. The catalysed reaction is (R)-pantothenate + ATP = (R)-4'-phosphopantothenate + ADP + H(+). The protein operates within cofactor biosynthesis; coenzyme A biosynthesis; CoA from (R)-pantothenate: step 1/5. Catalyzes the phosphorylation of pantothenate (Pan), the first step in CoA biosynthesis. The chain is Type III pantothenate kinase from Frankia alni (strain DSM 45986 / CECT 9034 / ACN14a).